Reading from the N-terminus, the 98-residue chain is NADH-ubiquinone oxidoreductase chain 4L (98 aa).

3 helical membrane passes run 2–22 (PSIF…MLIF), 37–57 (MLSM…TMSF), and 61–81 (ILLL…LVTV).

It belongs to the complex I subunit 4L family. Core subunit of respiratory chain NADH dehydrogenase (Complex I) which is composed of 45 different subunits.

The protein localises to the mitochondrion inner membrane. It carries out the reaction a ubiquinone + NADH + 5 H(+)(in) = a ubiquinol + NAD(+) + 4 H(+)(out). In terms of biological role, core subunit of the mitochondrial membrane respiratory chain NADH dehydrogenase (Complex I) which catalyzes electron transfer from NADH through the respiratory chain, using ubiquinone as an electron acceptor. Part of the enzyme membrane arm which is embedded in the lipid bilayer and involved in proton translocation. The protein is NADH-ubiquinone oxidoreductase chain 4L (MT-ND4L) of Varecia rubra (Red ruffed lemur).